The following is a 74-amino-acid chain: ATP synthase subunit 9, mitochondrial (74 aa).

2 helical membrane passes run 8-28 and 50-70; these read MGAGAATIALAGAAIGIGNVF and ILGFALTEAIALFALMMAFLI.

Belongs to the ATPase C chain family. As to quaternary structure, F-type ATPases have 2 components, CF(1) - the catalytic core - and CF(0) - the membrane proton channel. CF(1) has five subunits: alpha(3), beta(3), gamma(1), delta(1), epsilon(1). CF(0) has three main subunits: a, b and c.

It localises to the mitochondrion membrane. Functionally, this protein is one of the chains of the nonenzymatic membrane component (F0) of mitochondrial ATPase. This chain is ATP synthase subunit 9, mitochondrial (ATP9), found in Solanum lycopersicum (Tomato).